A 239-amino-acid chain; its full sequence is Diablo IAP-binding mitochondrial protein (239 aa).

The N-terminal 22 residues, 1 to 22 (MAVLKSWLSRSVTLLFRYRQCL), are a transit peptide targeting the mitochondrion. Positions 56 to 60 (AVPIA) match the IAP-binding motif. A disordered region spans residues 217–239 (RQKTQEEGEERAESEQEAYLRED).

It belongs to the Smac/DIABLO protein family. Homodimer. Interacts with BEX3. Interacts with BIRC2/c-IAP1 (via BIR3 domain). Interacts with BIRC6/BRUCE. Interacts with BIRC7/livin. Interacts with XIAP/BIRC4 (via BIR3 domain). Interacts with the monomeric and dimeric form of BIRC5/survivin. Interacts with AREL1 (via HECT domain); in the cytoplasm following induction of apoptosis. Ubiquitinated by BIRC7/livin. Ubiquitinated by BIRC6. In terms of processing, the precursor form is proteolytically cleaved by mitochondrial processing peptidase MPP to remove the transit peptide and produce an intermediate form. This is then processed by PARL to produce the mature cleaved form which is released from mitochondria into the cytosol in apoptotic cells.

The protein resides in the mitochondrion. It is found in the cytoplasm. Its subcellular location is the cytosol. Promotes apoptosis by activating caspases in the cytochrome c/Apaf-1/caspase-9 pathway. Acts by opposing the inhibitory activity of inhibitor of apoptosis proteins (IAP). Inhibits the activity of BIRC6/BRUCE by inhibiting its binding to caspases. The chain is Diablo IAP-binding mitochondrial protein from Pongo abelii (Sumatran orangutan).